The sequence spans 429 residues: 3-phosphoshikimate 1-carboxyvinyltransferase (429 aa).

Residues Lys-23, Ser-24, and Arg-28 each coordinate 3-phosphoshikimate. Lys-23 lines the phosphoenolpyruvate pocket. Positions 97 and 125 each coordinate phosphoenolpyruvate. Residues Ser-170, Ser-171, Gln-172, Ser-198, Asp-314, Asn-338, and Lys-342 each contribute to the 3-phosphoshikimate site. Residue Gln-172 coordinates phosphoenolpyruvate. Catalysis depends on Asp-314, which acts as the Proton acceptor. The phosphoenolpyruvate site is built by Arg-346, Arg-388, and Lys-413.

Belongs to the EPSP synthase family. Monomer.

The protein resides in the cytoplasm. It catalyses the reaction 3-phosphoshikimate + phosphoenolpyruvate = 5-O-(1-carboxyvinyl)-3-phosphoshikimate + phosphate. Its pathway is metabolic intermediate biosynthesis; chorismate biosynthesis; chorismate from D-erythrose 4-phosphate and phosphoenolpyruvate: step 6/7. Functionally, catalyzes the transfer of the enolpyruvyl moiety of phosphoenolpyruvate (PEP) to the 5-hydroxyl of shikimate-3-phosphate (S3P) to produce enolpyruvyl shikimate-3-phosphate and inorganic phosphate. The sequence is that of 3-phosphoshikimate 1-carboxyvinyltransferase from Pectobacterium carotovorum subsp. carotovorum (strain PC1).